The sequence spans 494 residues: MGNFIQGCKDYFSQQKNTNIRLTLPVVCFVWQIAMIILFGVFIRYDEESDTHWVETKAHDNITSDIENDFYFRYPSFQDVHVMIFVGFGFLMTFLKRYSFGAVGFNFLIASFGLQWALLMQGWFHSLDPQTGKIFIGVESLINADFCVAGCLIAYGAVLGKVSPVQLLVMTLFGVTLFAVEEYIILNLLHARDAGGSMVIHTFGGYYGLTISWVLYRPNLHQSKRMQGSVYHSDIFAMIGTLFLWMFWPSFNSAITDHGDGQHRAVINTYLCLASTVLTTVAISSFSQKTGKLDMVHIQNSTLAGGVALGTAAEFMISPYGALIVGFLCGIISTMGYIFISPFLEKTLKIQDTCGIHNLHAMPGVIGGIVGAITAAAASESVYGKHALINTFDFTGDFKDRTVLTQGGYQAAGMCVSIVFGVAGGAIVGSILKLPIWGDPADENCFDDEVYWELPDEEEEHQESIPPILEYNNHMIHKRQDLSESNFSVEHCES.

Residues 1–22 lie on the Cytoplasmic side of the membrane; sequence MGNFIQGCKDYFSQQKNTNIRL. A helical membrane pass occupies residues 23 to 43; that stretch reads TLPVVCFVWQIAMIILFGVFI. At 44–74 the chain is on the extracellular side; sequence RYDEESDTHWVETKAHDNITSDIENDFYFRY. An N-linked (GlcNAc...) asparagine glycan is attached at asparagine 61. A helical membrane pass occupies residues 75–95; that stretch reads PSFQDVHVMIFVGFGFLMTFL. At 96-99 the chain is on the cytoplasmic side; sequence KRYS. Residues 100-120 traverse the membrane as a helical segment; the sequence is FGAVGFNFLIASFGLQWALLM. Topologically, residues 121–133 are extracellular; the sequence is QGWFHSLDPQTGK. A helical transmembrane segment spans residues 134 to 154; sequence IFIGVESLINADFCVAGCLIA. Topologically, residues 155–166 are cytoplasmic; the sequence is YGAVLGKVSPVQ. The chain crosses the membrane as a helical span at residues 167–187; the sequence is LLVMTLFGVTLFAVEEYIILN. At 188–194 the chain is on the extracellular side; the sequence is LLHARDA. The chain crosses the membrane as a helical span at residues 195–215; the sequence is GGSMVIHTFGGYYGLTISWVL. Topologically, residues 216–234 are cytoplasmic; it reads YRPNLHQSKRMQGSVYHSD. The helical transmembrane segment at 235–255 threads the bilayer; that stretch reads IFAMIGTLFLWMFWPSFNSAI. The Extracellular portion of the chain corresponds to 256–265; the sequence is TDHGDGQHRA. A helical transmembrane segment spans residues 266 to 286; sequence VINTYLCLASTVLTTVAISSF. Over 287-297 the chain is Cytoplasmic; the sequence is SQKTGKLDMVH. Residues 298-318 traverse the membrane as a helical segment; that stretch reads IQNSTLAGGVALGTAAEFMIS. Residue proline 319 is a topological domain, extracellular. The chain crosses the membrane as a helical span at residues 320–340; sequence YGALIVGFLCGIISTMGYIFI. The Cytoplasmic segment spans residues 341–358; the sequence is SPFLEKTLKIQDTCGIHN. The chain crosses the membrane as a helical span at residues 359–379; that stretch reads LHAMPGVIGGIVGAITAAAAS. The Extracellular portion of the chain corresponds to 380–411; sequence ESVYGKHALINTFDFTGDFKDRTVLTQGGYQA. The helical transmembrane segment at 412-432 threads the bilayer; the sequence is AGMCVSIVFGVAGGAIVGSIL. Topologically, residues 433 to 494 are cytoplasmic; it reads KLPIWGDPAD…SNFSVEHCES (62 aa).

Belongs to the ammonium transporter (TC 2.A.49) family. Rh subfamily. Homotrimer.

Its subcellular location is the apical cell membrane. Functionally, functions as an ammonia transporter. May play a role in the elimination of ammonia in the gill. The sequence is that of Ammonium transporter Rh type C (rhcg) from Oncorhynchus mykiss (Rainbow trout).